Consider the following 124-residue polypeptide: Large ribosomal subunit protein bL12 (124 aa).

The disordered stretch occupies residues 99–124 (KEGMNKEDAEKAKADLEAAGAKVELK). Over residues 101–114 (GMNKEDAEKAKADL) the composition is skewed to basic and acidic residues. Over residues 115 to 124 (EAAGAKVELK) the composition is skewed to low complexity.

Belongs to the bacterial ribosomal protein bL12 family. Homodimer. Part of the ribosomal stalk of the 50S ribosomal subunit. Forms a multimeric L10(L12)X complex, where L10 forms an elongated spine to which 2 to 4 L12 dimers bind in a sequential fashion. Binds GTP-bound translation factors.

In terms of biological role, forms part of the ribosomal stalk which helps the ribosome interact with GTP-bound translation factors. Is thus essential for accurate translation. This Campylobacter hominis (strain ATCC BAA-381 / DSM 21671 / CCUG 45161 / LMG 19568 / NCTC 13146 / CH001A) protein is Large ribosomal subunit protein bL12.